A 338-amino-acid chain; its full sequence is GTPase Obg (338 aa).

In terms of domain architecture, Obg spans 1–159 (MQFIDQAEIE…RRIRLELKLL (159 aa)). One can recognise an OBG-type G domain in the interval 160 to 328 (AEVGIIGLPN…MLQATWEQLD (169 aa)). GTP-binding positions include 166 to 173 (GLPNAGKS), 191 to 195 (FTTLI), 213 to 216 (DIPG), 280 to 283 (NKLD), and 309 to 311 (SAV). Mg(2+) contacts are provided by Ser173 and Thr193.

Belongs to the TRAFAC class OBG-HflX-like GTPase superfamily. OBG GTPase family. As to quaternary structure, monomer. Requires Mg(2+) as cofactor.

The protein localises to the cytoplasm. In terms of biological role, an essential GTPase which binds GTP, GDP and possibly (p)ppGpp with moderate affinity, with high nucleotide exchange rates and a fairly low GTP hydrolysis rate. Plays a role in control of the cell cycle, stress response, ribosome biogenesis and in those bacteria that undergo differentiation, in morphogenesis control. The chain is GTPase Obg from Gloeothece citriformis (strain PCC 7424) (Cyanothece sp. (strain PCC 7424)).